The primary structure comprises 264 residues: MIKVAVAGPRGKMGREAVKMIHEADTLELVAVVDSKHDGMLVRQLDGLPPSDAPVYNELERCLTSQTIDVLVDLTTPAHGKRHMEIALDHGVRPVVGTTGFTDEDITNLRKKAEEKGIGAIIAPNFAIGAILMMKFAQTAAKYLPDVEIIEMHHDRKLDAPSGTALKTAQLISEVRKAKQQGHPDETEELKGARGADFEGMSIHSVRLPGLVAHQEVLFGGVGQTLKIRHDSMNRESFMPGVKLSIETVMGIDTLVYGLENIIE.

8–13 is a binding site for NAD(+); that stretch reads GPRGKM. Lysine 36 is a binding site for NADP(+). Residues 97–99 and 123–126 each bind NAD(+); these read GTT and APNF. Residue histidine 153 is the Proton donor/acceptor of the active site. Residue histidine 154 participates in (S)-2,3,4,5-tetrahydrodipicolinate binding. The active-site Proton donor is lysine 157. 163–164 contacts (S)-2,3,4,5-tetrahydrodipicolinate; sequence GT.

This sequence belongs to the DapB family.

The protein localises to the cytoplasm. The enzyme catalyses (S)-2,3,4,5-tetrahydrodipicolinate + NAD(+) + H2O = (2S,4S)-4-hydroxy-2,3,4,5-tetrahydrodipicolinate + NADH + H(+). The catalysed reaction is (S)-2,3,4,5-tetrahydrodipicolinate + NADP(+) + H2O = (2S,4S)-4-hydroxy-2,3,4,5-tetrahydrodipicolinate + NADPH + H(+). The protein operates within amino-acid biosynthesis; L-lysine biosynthesis via DAP pathway; (S)-tetrahydrodipicolinate from L-aspartate: step 4/4. Its function is as follows. Catalyzes the conversion of 4-hydroxy-tetrahydrodipicolinate (HTPA) to tetrahydrodipicolinate. This is 4-hydroxy-tetrahydrodipicolinate reductase from Halalkalibacterium halodurans (strain ATCC BAA-125 / DSM 18197 / FERM 7344 / JCM 9153 / C-125) (Bacillus halodurans).